The chain runs to 478 residues: Cytochrome c-552 (478 aa).

The N-terminal stretch at 1–26 (MTRIKINARRIFSLLIPFFFFTSVHA) is a signal peptide. His94 contacts heme c. Cys122, Cys125, and Lys126 together coordinate heme. Heme c-binding residues include Cys160, Cys163, His164, Cys209, Cys212, and His213. Ca(2+)-binding residues include Glu215, Tyr216, Lys261, and Gln263. Tyr216 is a substrate binding site. Position 264 (His264) interacts with substrate. Residues His275, Cys282, Cys285, His286, His301, Cys314, Cys317, His318, and His393 each coordinate heme c.

Belongs to the cytochrome c-552 family. It depends on Ca(2+) as a cofactor. Requires heme c as cofactor.

The protein resides in the periplasm. It catalyses the reaction 6 Fe(III)-[cytochrome c] + NH4(+) + 2 H2O = 6 Fe(II)-[cytochrome c] + nitrite + 8 H(+). It participates in nitrogen metabolism; nitrate reduction (assimilation). Its function is as follows. Catalyzes the reduction of nitrite to ammonia, consuming six electrons in the process. This chain is Cytochrome c-552, found in Escherichia coli O17:K52:H18 (strain UMN026 / ExPEC).